Consider the following 249-residue polypeptide: Pleckstrin homology domain-containing family F member 2 (249 aa).

Ser-16 is modified (phosphoserine). The PH domain occupies 35–131 (VLIGEGVLTK…WMNHINKCVT (97 aa)). Lys-44 is subject to N6-acetyllysine. The FYVE-type zinc-finger motif lies at 152-212 (DSEATVCMRC…ICDFCYDLLS (61 aa)). 8 residues coordinate Zn(2+): Cys-158, Cys-161, Cys-175, Cys-178, Cys-183, Cys-186, Cys-204, and Cys-207. Over residues 221–233 (PTRSDSYSQSLKS) the composition is skewed to polar residues. A disordered region spans residues 221-249 (PTRSDSYSQSLKSPLNDASDDDDDDDSSD). The segment covering 238-249 (ASDDDDDDDSSD) has biased composition (acidic residues). Phosphoserine occurs at positions 239 and 248.

In terms of assembly, may interact with EEA1. In terms of tissue distribution, expressed in brain, stomach and thymus, as well as in kidney, spleen, and skeletal muscle. Also expressed in peripheral blood mononuclear cells and dendritic cells.

It is found in the early endosome membrane. The protein localises to the endoplasmic reticulum. Its function is as follows. May play a role in early endosome fusion upstream of RAB5, hence regulating receptor trafficking and fluid-phase transport. Enhances cellular sensitivity to TNF-induced apoptosis. The sequence is that of Pleckstrin homology domain-containing family F member 2 (Plekhf2) from Mus musculus (Mouse).